The following is a 699-amino-acid chain: Cyclic AMP-dependent transcription factor ATF-6 beta (699 aa).

The residue at position 2 (Ala2) is an N-acetylalanine. Residues Ala2–Lys393 lie on the Cytoplasmic side of the membrane. Disordered regions lie at residues Ser59–Gly114, Val218–Val246, and Glu290–Ser313. Residues Pro68–Ile78 show a composition bias toward pro residues. Residues Ser86–Pro109 are compositionally biased toward low complexity. A bZIP domain is found at Leu322–Leu385. Residues Lys324 to Lys344 form a basic motif region. Residues Leu347–Leu354 are leucine-zipper. A helical; Signal-anchor for type II membrane protein transmembrane segment spans residues Val394 to Ser414. Over Glu415–Pro699 the chain is Lumenal. A disordered region spans residues Pro417–Leu474. The span at Pro458–Gly467 shows a compositional bias: polar residues. Residues Asn473 and Asn502 are each glycosylated (N-linked (GlcNAc...) asparagine). Residues Arg519–His529 show a composition bias toward basic residues. Positions Arg519–Gly563 are disordered. The span at Pro545 to Pro556 shows a compositional bias: pro residues. N-linked (GlcNAc...) asparagine glycans are attached at residues Asn607, Asn624, and Asn673. A disordered region spans residues Ser657–Pro699. Residues Pro680–Pro693 show a composition bias toward low complexity.

The protein belongs to the bZIP family. ATF subfamily. In terms of assembly, homodimer and heterodimer with ATF6-alpha. The dimer interacts with the nuclear transcription factor Y (NF-Y) trimer through direct binding to NF-Y subunit C (NF-YC). Post-translationally, N-glycosylated. During unfolded protein response, a fragment of approximately 60 kDa containing the cytoplasmic transcription factor domain is released by proteolysis. The cleavage is probably performed sequentially by site-1 (MBTPS1, S1P) and site-2 (MBTPS2, S2P) proteases.

It is found in the endoplasmic reticulum membrane. The protein resides in the nucleus. In terms of biological role, precursor of the transcription factor form (Processed cyclic AMP-dependent transcription factor ATF-6 beta), which is embedded in the endoplasmic reticulum membrane. Endoplasmic reticulum stress promotes processing of this form, releasing the transcription factor form that translocates into the nucleus, where it activates transcription of genes involved in the unfolded protein response (UPR). Its function is as follows. Transcription factor that acts in the unfolded protein response (UPR) pathway by activating UPR target genes induced during ER stress. Binds DNA on the 5'-CCAC[GA]-3' half of the ER stress response element (ERSE) (5'-CCAATN(9)CCAC[GA]-3') when NF-Y is bound to ERSE. The chain is Cyclic AMP-dependent transcription factor ATF-6 beta (Atf6b) from Mus musculus (Mouse).